The chain runs to 192 residues: Apoptosis regulator BAX (192 aa).

Methionine 1 bears the N-acetylmethionine mark. The BH3 signature appears at 59–73 (LSECLKRIGDELDSN). Positions 98-118 (DMFSDGNFNWGRVVALFYFAS) match the BH1 motif. Lysine 128 is covalently cross-linked (Glycyl lysine isopeptide (Lys-Gly) (interchain with G-Cter in ubiquitin)). The BH2 motif lies at 150–165 (GWIQDQGGWDGLLSYF). A helical membrane pass occupies residues 172 to 192 (TVTIFVAGVLTASLTIWKKMG). Lysine 190 participates in a covalent cross-link: Glycyl lysine isopeptide (Lys-Gly) (interchain with G-Cter in ubiquitin).

This sequence belongs to the Bcl-2 family. Homodimer. Forms higher oligomers under stress conditions. Forms heterooligomers with BAK. Interacts with BCL2L11. Interaction with BCL2L11 promotes BAX oligomerization and association with mitochondrial membranes, with subsequent release of cytochrome c. Forms heterodimers with BCL2, BCL2L1 isoform Bcl-X(L), BCL2L2, MCL1 and A1. Interacts with SH3GLB1. Interacts with humanin; forms fibers with humanin which results in BAX conformational changes and sequestering of BAX into the fibers, preventing BAX activation. Interacts with SFN and YWHAZ; the interaction occurs in the cytoplasm. Under stress conditions, JNK-mediated phosphorylation of SFN and YWHAZ, releases BAX to mitochondria. Interacts with RNF144B, which regulates the ubiquitin-dependent stability of BAX. Interacts with CLU under stress conditions that cause a conformation change leading to BAX oligomerization and association with mitochondria. Does not interact with CLU in unstressed cells. Interacts with FAIM2/LFG2. Interacts with RTL10/BOP. Interacts (via a C-terminal 33 residues) with NOL3 (via CARD domain); inhibits BAX activation and translocation and consequently cytochrome c release from mitochondria. Interacts with GIMAP3/IAN4 and GIMAP5/IAN5; this interaction is increased, when cells initiate apoptosis upon IL2 withdrawal. Interacts with IRF3; the interaction is direct, increases upon Sendai virus infection and mediates the formation of the apoptosis complex TOMM70:HSP90AA1:IRF3:BAX. Interacts with MOAP1, facilitating BAX-dependent mitochondrial outer membrane permeabilization and apoptosis. Interacts with BCL2L10/BCL-B. Interacts with non-acetylated XRCC6/Ku70; this interaction leads to BAX sequestration in the cytosol, away from the mitochondria, preventing BAX-mediated apoptosis. As to quaternary structure, interacts with BCL2A1 and BCL2L1 isoform Bcl-X(L). In terms of assembly, (Microbial infection) Interacts with adenovirus E1B 19K protein; this interaction blocks BAX oligomerization. (Microbial infection) Interacts with human cytomegalovirus/HHV-5 protein vMIA/UL37. As to quaternary structure, (Microbial infection) Interacts with enterovirus protein 2B; this interaction activates BAX-induced apoptosis. Post-translationally, ubiquitinated in the absence of XRCC6/Ku70. Ubiquitination promotes protein degradation. Ubiquitinated on Lys-128 and Lys-190. 'Lys-63'-linked polyubiquitin chains on Lys-128 are removed by USP12. As to expression, expressed in a wide variety of tissues. Isoform Psi is found in glial tumors. Isoform Alpha is expressed in spleen, breast, ovary, testis, colon and brain, and at low levels in skin and lung. Isoform Sigma is expressed in spleen, breast, ovary, testis, lung, colon, brain and at low levels in skin. Isoform Alpha and isoform Sigma are expressed in pro-myelocytic leukemia, histiocytic lymphoma, Burkitt's lymphoma, T-cell lymphoma, lymphoblastic leukemia, breast adenocarcinoma, ovary adenocarcinoma, prostate carcinoma, prostate adenocarcinoma, lung carcinoma, epidermoid carcinoma, small cell lung carcinoma and colon adenocarcinoma cell lines.

It localises to the mitochondrion outer membrane. The protein localises to the cytoplasm. Its subcellular location is the nucleus. Plays a role in the mitochondrial apoptotic process. Under normal conditions, BAX is largely cytosolic via constant retrotranslocation from mitochondria to the cytosol mediated by BCL2L1/Bcl-xL, which avoids accumulation of toxic BAX levels at the mitochondrial outer membrane (MOM). Under stress conditions, undergoes a conformation change that causes translocation to the mitochondrion membrane, leading to the release of cytochrome c that then triggers apoptosis. Promotes activation of CASP3, and thereby apoptosis. The polypeptide is Apoptosis regulator BAX (BAX) (Homo sapiens (Human)).